Reading from the N-terminus, the 23-residue chain is Acidic phospholipase CHA-E6a (23 aa).

The protein belongs to the phospholipase A2 family. Group II subfamily. D49 sub-subfamily. It depends on Ca(2+) as a cofactor. Contains 7 disulfide bonds. Expressed by the venom gland.

It localises to the secreted. It catalyses the reaction a 1,2-diacyl-sn-glycero-3-phosphocholine + H2O = a 1-acyl-sn-glycero-3-phosphocholine + a fatty acid + H(+). In terms of biological role, snake venom phospholipase A2 (PLA2) that shows high lipolytic (1048 umol/mg/min) and weak ADP-induced platelet aggregation activities. Also shows weak anticoagulant activity (IC(50) is less than 1.0 uM). PLA2 catalyzes the calcium-dependent hydrolysis of the 2-acyl groups in 3-sn-phosphoglycerides. The polypeptide is Acidic phospholipase CHA-E6a (Crotalus horridus (Timber rattlesnake)).